A 3390-amino-acid chain; its full sequence is MNNQRKKTGKPSINMLKRVRNRVSTGSQLAKRFSKGLLNGQGPMKLVMAFIAFLRFLAIPPTAGVLARWGTFKKSGAIKVLKGFKKEISNMLSIINKRKKTSLCLMMIMPAALAFHLTSRDGEPRMIVGKNERGKSLLFKTASGINMCTLIAMDLGEMCDDTVTYKCPHITEVEPEDIDCWCNLTSTWVTYGTCNQAGERRRDKRSVALAPHVGMGLDTRTQTWMSAEGAWRQVEKVETWALRHPGFTILALFLAHYIGTSLTQKVVIFILLMLVTPSMTMRCVGVGNRDFVEGLSGATWVDVVLEHGGCVTTMAKNKPTLDIELQKTEATQLATLRKLCIEGKITNITTDSRCPTQGEAVLPEEQDQNYVCKHTYVDRGWGNGCGLFGKGSLVTCAKFQCLEPIEGKVVQYENLKYTVIITVHTGDQHQVGNETQGVTAEITPQASTTEAILPEYGTLGLECSPRTGLDFNEMILLTMKNKAWMVHRQWFFDLPLPWTSGATTETPTWNRKELLVTFKNAHAKKQEVVVLGSQEGAMHTALTGATEIQNSGGTSIFAGHLKCRLKMDKLELKGMSYAMCTNTFVLKKEVSETQHGTILIKVEYKGEDAPCKIPFSTEDGQGKAHNGRLITANPVVTKKEEPVNIEAEPPFGESNIVIGIGDNALKINWYKKGSSIGKMFEATARGARRMAILGDTAWDFGSVGGVLNSLGKMVHQIFGSAYTALFSGVSWVMKIGIGVLLTWIGLNSKNTSMSFSCIAIGIITLYLGAVVQADMGCVINWKGKELKCGSGIFVTNEVHTWTEQYKFQADSPKRLATAIAGAWENGVCGIRSTTRMENLLWKQIANELNYILWENNIKLTVVVGDIIGVLEQGKRTLTPQPMELKYSWKTWGKAKIVTAETQNSSFIIDGPNTPECPSASRAWNVWEVEDYGFGVFTTNIWLKLREVYTQLCDHRLMSAAVKDERAVHADMGYWIESQKNGSWKLEKASLIEVKTCTWPKSHTLWSNGVLESDMIIPKSLAGPISQHNHRPGYHTQTAGPWHLGKLELDFNYCEGTTVVITENCGTRGPSLRTTTVSGKLIHEWCCRSCTLPPLRYMGEDGCWYGMEIRPISEKEENMVKSLVSAGSGKVDNFTMGVLCLAILFEEVMRGKFGKKHMIAGVFFTFVLLLSGQITWRDMAHTLIMIGSNASDRMGMGVTYLALIATFKIQPFLALGFFLRKLTSRENLLLGVGLAMATTLQLPEDIEQMANGIALGLMALKLITQFETYQLWTALISLTCSNTMFTLTVAWRTATLILAGVSLLPVCQSSSMRKTDWLPMAVAAMGVPPLPLFIFSLKDTLKRRSWPLNEGVMAVGLVSILASSLLRNDVPMAGPLVAGGLLIACYVITGTSADLTVEKAADITWEEEAEQTGVSHNLMITVDDDGTMRIKDDETENILTVLLKTALLIVSGVFPYSIPATLLVWHTWQKQTQRSGVLWDVPSPPETQKAELEEGVYRIKQQGIFGKTQVGVGVQKEGVFHTMWHVTRGAVLTYNGKRLEPNWASVKKDLISYGGGWRLSAQWQKGEEVQVIAVEPGKNPKNFQTMPGTFQTTTGEIGAIALDFKPGTSGSPIINREGKVVGLYGNGVVTKNGGYVSGIAQTNAEPDGPTPELEEEMFKKRNLTIMDLHPGSGKTRKYLPAIVREAIKRRLRTLILAPTRVVAAEMEEALKGLPIRYQTTATKSEHTGREIVDLMCHATFTMRLLSPVRVPNYNLIIMDEAHFTDPASIAARGYISTRVGMGEAAAIFMTATPPGTADAFPQSNAPIQDEERDIPERSWNSGNEWITDFAGKTVWFVPSIKAGNDIANCLRKNGKKVIQLSRKTFDTEYQKTKLNDWDFVVTTDISEMGANFKADRVIDPRRCLKPVILTDGPERVILAGPMPVTAASAAQRRGRVGRNPQKENDQYIFTGQPLNNDEDHAHWTEAKMLLDNINTPEGIIPALFEPEREKSAAIDGEYRLKGESRKTFVELMRRGDLPVWLAHKVASEGIKYTDRKWCFDGQRNNQILEENMDVEIWTKEGEKKKLRPRWLDARTYSDPLALKEFKDFAAGRKSIALDLVTEIGRVPSHLAHRTRNALDNLVMLHTSEHGGRAYRHAVEELPETMETLLLLGLMILLTGGAMLFLISGKGIGKTSIGLICVIASSGMLWMAEIPLQWIASAIVLEFFMMVLLIPEPEKQRTPQDNQLAYVVIGILTLAAIIAANEMGLLETTKRDLGMSKEPGVVSPTSYLDVDLHPASAWTLYAVATTVITPMLRHTIENSTANVSLAAIANQAVVLMGLDKGWPISKMDLGVPLLALGCYSQVNPLTLTAAVLLLITHYAIIGPGLQAKATREAQKRTAAGIMKNPTVDGIMTIDLDPVIYDSKFEKQLGQVMLLVLCAVQLLLMRTSWALCEALTLATGPITTLWEGSPGKFWNTTIAVSMANIFRGSYLAGAGLAFSIMKSVGTGKRGTGSQGETLGEKWKKKLNQLSRKEFDLYKKSGITEVDRTEAKEGLKRGEITHHAVSRGSAKLQWFVERNMVIPEGRVIDLGCGRGGWSYYCAGLKKVTEVRGYTKGGPGHEEPVPMSTYGWNIVKLMSGKDVFYLPPEKCDTLLCDIGESSPSPTVEESRTIRVLKMVEPWLKNNQFCIKVLNPYMPTVIEHLERLQRKHGGMLVRNPLSRNSTHEMYWISNGTGNIVASVNMVSRLLLNRFTMTHRRPTIEKDVDLGAGTRHVNAEPETPNMDVIGERIKRIKEEHNSTWHYDDENPYKTWAYHGSYEVKATGSASSMINGVVKLLTKPWDVVPMVTQMAMTDTTPFGQQRVFKEKVDTRTPRSMPGTRRVMGITAEWLWRTLGRNKKPRLCTREEFTKKVRTNAAMGAVFTEENQWDSAKAAVEDEDFWKLVDRERELHKLGKCGSCVYNMMGKREKKLGEFGKAKGSRAIWYMWLGARYLEFEALGFLNEDHWFSRENSYSGVEGEGLHKLGYILRDISKIPGGAMYADDTAGWDTRITEDDLHNEEKITQQMDPEHRQLANAIFKLTYQNKVVKVQRPTPTGTVMDIISRKDQRGSGQVGTYGLNTFTNMEAQLIRQMEGEGVLSKADLENPHLPEKKITQWLETKGVERLKRMAISGDDCVVKPIDDRFANALLALNDMGKVRKDIPQWQPSKGWHDWQQVPFCSHHFHELIMKDGRKLVVPCRPQDELIGRARISQGAGWSLRETACLGKAYAQMWSLMYFHRRDLRLASNAICSAVPVHWVPTSRTTWSIHAHHQWMTTEDMLTVWNRVWIEDNPWMEDKTPVTTWENVPYLGKREDQWCGSLIGLTSRATWAQNIPTAIQQVRSLIGNEEFLDYMPSMKRFRKEEESEGAIW.

The interaction with host EXOC1 stretch occupies residues 1–15 (MNNQRKKTGKPSINM). At 1–100 (MNNQRKKTGK…MLSIINKRKK (100 aa)) the chain is on the cytoplasmic side. Residues 37–72 (LLNGQGPMKLVMAFIAFLRFLAIPPTAGVLARWGTF) form a hydrophobic; homodimerization of capsid protein C region. The propeptide at 101–114 (TSLCLMMIMPAALA) is ER anchor for the capsid protein C, removed in mature form by serine protease NS3. Residues 101–120 (TSLCLMMIMPAALAFHLTSR) form a helical membrane-spanning segment. At 121 to 243 (DGEPRMIVGK…VEKVETWALR (123 aa)) the chain is on the extracellular side. N-linked (GlcNAc...) asparagine; by host glycosylation is present at Asn-183. The helical transmembrane segment at 244–264 (HPGFTILALFLAHYIGTSLTQ) threads the bilayer. A topological domain (cytoplasmic) is located at residue Lys-265. A helical transmembrane segment spans residues 266 to 280 (VVIFILLMLVTPSMT). Residues 281–723 (MRCVGVGNRD…VHQIFGSAYT (443 aa)) lie on the Extracellular side of the membrane. Cystine bridges form between Cys-283–Cys-310, Cys-340–Cys-401, Cys-354–Cys-385, and Cys-372–Cys-396. Asn-347 carries an N-linked (GlcNAc...) asparagine; by host glycan. A fusion peptide region spans residues 378–391 (DRGWGNGCGLFGKG). N-linked (GlcNAc...) asparagine; by host glycosylation is present at Asn-433. Intrachain disulfides connect Cys-463–Cys-563 and Cys-580–Cys-611. A helical transmembrane segment spans residues 724 to 744 (ALFSGVSWVMKIGIGVLLTWI). Residues 745–750 (GLNSKN) lie on the Cytoplasmic side of the membrane. Residues 751-771 (TSMSFSCIAIGIITLYLGAVV) traverse the membrane as a helical segment. Residues 772–1193 (QADMGCVINW…MIGSNASDRM (422 aa)) lie on the Extracellular side of the membrane. 6 cysteine pairs are disulfide-bonded: Cys-777–Cys-788, Cys-828–Cys-916, Cys-952–Cys-996, Cys-1053–Cys-1102, Cys-1064–Cys-1086, and Cys-1085–Cys-1089. N-linked (GlcNAc...) asparagine; by host glycans are attached at residues Asn-903 and Asn-980. N-linked (GlcNAc...) asparagine; by host glycans are attached at residues Asn-1132 and Asn-1188. Residues 1194-1218 (GMGVTYLALIATFKIQPFLALGFFL) traverse the membrane as a helical segment. Residues 1219–1224 (RKLTSR) lie on the Cytoplasmic side of the membrane. Residues 1225–1243 (ENLLLGVGLAMATTLQLPE) traverse the membrane as a helical segment. The Lumenal segment spans residues 1244–1267 (DIEQMANGIALGLMALKLITQFET). Residues 1268–1288 (YQLWTALISLTCSNTMFTLTV) form a helical membrane-spanning segment. A topological domain (cytoplasmic) is located at residue Ala-1289. A helical transmembrane segment spans residues 1290-1308 (WRTATLILAGVSLLPVCQS). The Lumenal portion of the chain corresponds to 1309 to 1315 (SSMRKTD). A helical membrane pass occupies residues 1316 to 1336 (WLPMAVAAMGVPPLPLFIFSL). At 1337-1344 (KDTLKRRS) the chain is on the cytoplasmic side. Residues 1345 to 1365 (WPLNEGVMAVGLVSILASSLL) traverse the membrane as a helical segment. The Lumenal portion of the chain corresponds to 1366–1368 (RND). Residues 1369-1389 (VPMAGPLVAGGLLIACYVITG) form a helical membrane-spanning segment. Residues 1390-1443 (TSADLTVEKAADITWEEEAEQTGVSHNLMITVDDDGTMRIKDDETENILTVLLK) lie on the Cytoplasmic side of the membrane. Residues 1396–1435 (VEKAADITWEEEAEQTGVSHNLMITVDDDGTMRIKDDETE) are interacts with and activates NS3 protease. An intramembrane region (helical) is located at residues 1444–1464 (TALLIVSGVFPYSIPATLLVW). At 1465–2146 (HTWQKQTQRS…VEELPETMET (682 aa)) the chain is on the cytoplasmic side. The Peptidase S7 domain occupies 1474-1651 (SGVLWDVPSP…NAEPDGPTPE (178 aa)). Active-site charge relay system; for serine protease NS3 activity residues include His-1524, Asp-1548, and Ser-1608. The 157-residue stretch at 1654-1810 (EEMFKKRNLT…QSNAPIQDEE (157 aa)) folds into the Helicase ATP-binding domain. The interval 1658-1661 (KKRN) is important for RNA-binding. An ATP-binding site is contributed by 1667-1674 (LHPGSGKT). The DEAH box signature appears at 1758 to 1761 (DEAH). In terms of domain architecture, Helicase C-terminal spans 1820-1986 (SGNEWITDFA…GIIPALFEPE (167 aa)). At Lys-1862 the chain carries N6-acetyllysine; by host. The helical transmembrane segment at 2147 to 2167 (LLLLGLMILLTGGAMLFLISG) threads the bilayer. Residues 2168–2169 (KG) lie on the Lumenal side of the membrane. The segment at residues 2170–2190 (IGKTSIGLICVIASSGMLWMA) is an intramembrane region (helical). Glu-2191 is a topological domain (lumenal). The helical transmembrane segment at 2192 to 2212 (IPLQWIASAIVLEFFMMVLLI) threads the bilayer. At 2213–2227 (PEPEKQRTPQDNQLA) the chain is on the cytoplasmic side. Residues 2228 to 2248 (YVVIGILTLAAIIAANEMGLL) traverse the membrane as a helical segment. Over 2249-2273 (ETTKRDLGMSKEPGVVSPTSYLDVD) the chain is Lumenal. An intramembrane region (helical) is located at residues 2274–2294 (LHPASAWTLYAVATTVITPML). Residues 2295–2305 (RHTIENSTANV) lie on the Lumenal side of the membrane. N-linked (GlcNAc...) asparagine; by host glycosylation is found at Asn-2300 and Asn-2304. Residues 2306 to 2326 (SLAAIANQAVVLMGLDKGWPI) constitute an intramembrane region (helical). Residues 2327-2346 (SKMDLGVPLLALGCYSQVNP) are Lumenal-facing. A helical membrane pass occupies residues 2347–2367 (LTLTAAVLLLITHYAIIGPGL). Topologically, residues 2368–2412 (QAKATREAQKRTAAGIMKNPTVDGIMTIDLDPVIYDSKFEKQLGQ) are cytoplasmic. A helical membrane pass occupies residues 2413 to 2433 (VMLLVLCAVQLLLMRTSWALC). Residues 2434 to 2458 (EALTLATGPITTLWEGSPGKFWNTT) lie on the Lumenal side of the membrane. Asn-2456 is a glycosylation site (N-linked (GlcNAc...) asparagine; by host). A helical transmembrane segment spans residues 2459 to 2479 (IAVSMANIFRGSYLAGAGLAF). The Cytoplasmic portion of the chain corresponds to 2480 to 3390 (SIMKSVGTGK…KEEESEGAIW (911 aa)). The mRNA cap 0-1 NS5-type MT domain maps to 2492–2753 (TGSQGETLGE…DVDLGAGTRH (262 aa)). Position 2546 (Ser-2546) interacts with S-adenosyl-L-methionine. Residue Ser-2546 is modified to Phosphoserine. The active-site For 2'-O-MTase activity is the Lys-2551. Residues 2567-2570 (VIDL) carry the SUMO-interacting motif motif. Gly-2576, Trp-2577, Thr-2594, Lys-2595, Asp-2621, and Val-2622 together coordinate S-adenosyl-L-methionine. Residue Asp-2636 is the For 2'-O-MTase activity of the active site. Residue Ile-2637 participates in S-adenosyl-L-methionine binding. Active-site for 2'-O-MTase activity residues include Lys-2670 and Glu-2706. Tyr-2708 contacts S-adenosyl-L-methionine. Zn(2+) contacts are provided by Glu-2927, His-2931, Cys-2936, and Cys-2939. Residues 3018–3168 (AMYADDTAGW…PIDDRFANAL (151 aa)) form the RdRp catalytic domain. Zn(2+) is bound by residues His-3202, Cys-3218, and Cys-3337.

In the N-terminal section; belongs to the class I-like SAM-binding methyltransferase superfamily. mRNA cap 0-1 NS5-type methyltransferase family. As to quaternary structure, homodimer. Interacts (via N-terminus) with host EXOC1 (via C-terminus); this interaction results in EXOC1 degradation through the proteasome degradation pathway. In terms of assembly, forms heterodimers with envelope protein E in the endoplasmic reticulum and Golgi. Homodimer; in the endoplasmic reticulum and Golgi. Interacts with protein prM. Interacts with non-structural protein 1. As to quaternary structure, homodimer; Homohexamer when secreted. Interacts with envelope protein E. In terms of assembly, interacts (via N-terminus) with serine protease NS3. Forms a heterodimer with serine protease NS3. May form homooligomers. As to quaternary structure, forms a heterodimer with NS2B. Interacts with NS4B. Interacts with unphosphorylated RNA-directed RNA polymerase NS5; this interaction stimulates RNA-directed RNA polymerase NS5 guanylyltransferase activity. In terms of assembly, interacts with host MAVS; this interaction inhibits the synthesis of IFN-beta. Interacts with host AUP1; the interaction occurs in the presence of Dengue virus NS4B and induces lipophagy which facilitates production of virus progeny particles. Interacts with serine protease NS3. As to quaternary structure, homodimer. Interacts with host STAT2; this interaction inhibits the phosphorylation of the latter, and, when all viral proteins are present (polyprotein), targets STAT2 for degradation. Interacts with serine protease NS3. Specific enzymatic cleavages in vivo yield mature proteins. Cleavages in the lumen of endoplasmic reticulum are performed by host signal peptidase, whereas cleavages in the cytoplasmic side are performed by serine protease NS3. Signal cleavage at the 2K-4B site requires a prior NS3 protease-mediated cleavage at the 4A-2K site. Post-translationally, cleaved in post-Golgi vesicles by a host furin, releasing the mature small envelope protein M, and peptide pr. This cleavage is incomplete as up to 30% of viral particles still carry uncleaved prM. In terms of processing, N-glycosylated. N-glycosylated. The excreted form is glycosylated and this is required for efficient secretion of the protein from infected cells. Post-translationally, acetylated by host KAT5. Acetylation modulates NS3 RNA-binding and unwinding activities and plays an important positive role for viral replication. In terms of processing, sumoylation of RNA-directed RNA polymerase NS5 increases NS5 protein stability allowing proper viral RNA replication. Phosphorylated on serines residues. This phosphorylation may trigger NS5 nuclear localization.

Its subcellular location is the virion. It localises to the host nucleus. The protein localises to the host cytoplasm. The protein resides in the host perinuclear region. It is found in the secreted. Its subcellular location is the virion membrane. It localises to the host endoplasmic reticulum membrane. The protein localises to the host mitochondrion. The enzyme catalyses Selective hydrolysis of -Xaa-Xaa-|-Yaa- bonds in which each of the Xaa can be either Arg or Lys and Yaa can be either Ser or Ala.. The catalysed reaction is RNA(n) + a ribonucleoside 5'-triphosphate = RNA(n+1) + diphosphate. It carries out the reaction a ribonucleoside 5'-triphosphate + H2O = a ribonucleoside 5'-diphosphate + phosphate + H(+). It catalyses the reaction ATP + H2O = ADP + phosphate + H(+). The enzyme catalyses a 5'-end (5'-triphosphoguanosine)-ribonucleoside in mRNA + S-adenosyl-L-methionine = a 5'-end (N(7)-methyl 5'-triphosphoguanosine)-ribonucleoside in mRNA + S-adenosyl-L-homocysteine. The catalysed reaction is a 5'-end (N(7)-methyl 5'-triphosphoguanosine)-ribonucleoside in mRNA + S-adenosyl-L-methionine = a 5'-end (N(7)-methyl 5'-triphosphoguanosine)-(2'-O-methyl-ribonucleoside) in mRNA + S-adenosyl-L-homocysteine + H(+). In terms of biological role, plays a role in virus budding by binding to the cell membrane and gathering the viral RNA into a nucleocapsid that forms the core of a mature virus particle. During virus entry, may induce genome penetration into the host cytoplasm after hemifusion induced by the surface proteins. Can migrate to the cell nucleus where it modulates host functions. Overcomes the anti-viral effects of host EXOC1 by sequestering and degrading the latter through the proteasome degradation pathway. Inhibits RNA silencing by interfering with host Dicer. Its function is as follows. Prevents premature fusion activity of envelope proteins in trans-Golgi by binding to envelope protein E at pH6.0. After virion release in extracellular space, gets dissociated from E dimers. Functionally, acts as a chaperone for envelope protein E during intracellular virion assembly by masking and inactivating envelope protein E fusion peptide. prM is the only viral peptide matured by host furin in the trans-Golgi network probably to avoid catastrophic activation of the viral fusion activity in acidic Golgi compartment prior to virion release. prM-E cleavage is inefficient, and many virions are only partially matured. These uncleaved prM would play a role in immune evasion. In terms of biological role, may play a role in virus budding. Exerts cytotoxic effects by activating a mitochondrial apoptotic pathway through M ectodomain. May display a viroporin activity. Binds to host cell surface receptor and mediates fusion between viral and cellular membranes. Envelope protein is synthesized in the endoplasmic reticulum in the form of heterodimer with protein prM. They play a role in virion budding in the ER, and the newly formed immature particle is covered with 60 spikes composed of heterodimer between precursor prM and envelope protein E. The virion is transported to the Golgi apparatus where the low pH causes dissociation of PrM-E heterodimers and formation of E homodimers. prM-E cleavage is inefficient, and many virions are only partially matured. These uncleaved prM would play a role in immune evasion. Its function is as follows. Involved in immune evasion, pathogenesis and viral replication. Once cleaved off the polyprotein, is targeted to three destinations: the viral replication cycle, the plasma membrane and the extracellular compartment. Essential for viral replication. Required for formation of the replication complex and recruitment of other non-structural proteins to the ER-derived membrane structures. Excreted as a hexameric lipoparticle that plays a role against host immune response. Antagonizing the complement function. Binds to the host macrophages and dendritic cells. Inhibits signal transduction originating from Toll-like receptor 3 (TLR3). Functionally, disrupts the host endothelial glycocalyx layer of host pulmonary microvascular endothelial cells, inducing degradation of sialic acid and shedding of heparan sulfate proteoglycans. NS1 induces expression of sialidases, heparanase, and activates cathepsin L, which activates heparanase via enzymatic cleavage. These effects are probably linked to the endothelial hyperpermeability observed in severe dengue disease. In terms of biological role, component of the viral RNA replication complex that functions in virion assembly and antagonizes the host immune response. Required cofactor for the serine protease function of NS3. May have membrane-destabilizing activity and form viroporins. Its function is as follows. Displays three enzymatic activities: serine protease, NTPase and RNA helicase. NS3 serine protease, in association with NS2B, performs its autocleavage and cleaves the polyprotein at dibasic sites in the cytoplasm: C-prM, NS2A-NS2B, NS2B-NS3, NS3-NS4A, NS4A-2K and NS4B-NS5. NS3 RNA helicase binds RNA and unwinds dsRNA in the 3' to 5' direction. Functionally, regulates the ATPase activity of the NS3 helicase activity. NS4A allows NS3 helicase to conserve energy during unwinding. Plays a role in the inhibition of the host innate immune response. Interacts with host MAVS and thereby prevents the interaction between RIGI and MAVS. In turn, IFN-beta production is impaired. Interacts with host AUP1 which mediates induction of lipophagy in host cells and facilitates production of virus progeny particles. In terms of biological role, functions as a signal peptide for NS4B and is required for the interferon antagonism activity of the latter. Induces the formation of ER-derived membrane vesicles where the viral replication takes place. Inhibits interferon (IFN)-induced host STAT1 phosphorylation and nuclear translocation, thereby preventing the establishment of cellular antiviral state by blocking the IFN-alpha/beta pathway. Its function is as follows. Replicates the viral (+) and (-) RNA genome, and performs the capping of genomes in the cytoplasm. NS5 methylates viral RNA cap at guanine N-7 and ribose 2'-O positions. Besides its role in RNA genome replication, also prevents the establishment of cellular antiviral state by blocking the interferon-alpha/beta (IFN-alpha/beta) signaling pathway. Inhibits host TYK2 and STAT2 phosphorylation, thereby preventing activation of JAK-STAT signaling pathway. The polypeptide is Genome polyprotein (pol) (Dengue virus type 3 (strain Martinique/1243/1999) (DENV-3)).